A 486-amino-acid chain; its full sequence is Cardiolipin synthase A (486 aa).

The next 2 helical transmembrane spans lie at 3 to 23 and 38 to 58; these read TFYT…IAGV and MAWL…YLSF. PLD phosphodiesterase domains are found at residues 219-246 and 399-426; these read MDLR…VDPR and EGGL…DMRS. Catalysis depends on residues His-224, Lys-226, Asp-231, His-404, Lys-406, and Asp-411.

The protein belongs to the phospholipase D family. Cardiolipin synthase subfamily. ClsA sub-subfamily.

It localises to the cell inner membrane. It catalyses the reaction 2 a 1,2-diacyl-sn-glycero-3-phospho-(1'-sn-glycerol) = a cardiolipin + glycerol. In terms of biological role, catalyzes the reversible phosphatidyl group transfer from one phosphatidylglycerol molecule to another to form cardiolipin (CL) (diphosphatidylglycerol) and glycerol. The protein is Cardiolipin synthase A of Yersinia pseudotuberculosis serotype IB (strain PB1/+).